Reading from the N-terminus, the 372-residue chain is tRNA-specific 2-thiouridylase MnmA (372 aa).

ATP contacts are provided by residues 11–18 (GMSGGVDS) and Met-37. The interaction with target base in tRNA stretch occupies residues 97-99 (NPD). The active-site Nucleophile is Cys-102. Cys-102 and Cys-199 are disulfide-bonded. Gly-126 lines the ATP pocket. Positions 149–151 (KDQ) are interaction with tRNA. Catalysis depends on Cys-199, which acts as the Cysteine persulfide intermediate. The interval 309-310 (RY) is interaction with tRNA.

The protein belongs to the MnmA/TRMU family.

It localises to the cytoplasm. It catalyses the reaction S-sulfanyl-L-cysteinyl-[protein] + uridine(34) in tRNA + AH2 + ATP = 2-thiouridine(34) in tRNA + L-cysteinyl-[protein] + A + AMP + diphosphate + H(+). Functionally, catalyzes the 2-thiolation of uridine at the wobble position (U34) of tRNA, leading to the formation of s(2)U34. The sequence is that of tRNA-specific 2-thiouridylase MnmA from Staphylococcus aureus (strain Mu50 / ATCC 700699).